A 236-amino-acid polypeptide reads, in one-letter code: Phosphoribosylaminoimidazole-succinocarboxamide synthase (236 aa).

This sequence belongs to the SAICAR synthetase family.

It carries out the reaction 5-amino-1-(5-phospho-D-ribosyl)imidazole-4-carboxylate + L-aspartate + ATP = (2S)-2-[5-amino-1-(5-phospho-beta-D-ribosyl)imidazole-4-carboxamido]succinate + ADP + phosphate + 2 H(+). Its pathway is purine metabolism; IMP biosynthesis via de novo pathway; 5-amino-1-(5-phospho-D-ribosyl)imidazole-4-carboxamide from 5-amino-1-(5-phospho-D-ribosyl)imidazole-4-carboxylate: step 1/2. The polypeptide is Phosphoribosylaminoimidazole-succinocarboxamide synthase (Pseudomonas putida (strain W619)).